Here is a 175-residue protein sequence, read N- to C-terminus: Tumor necrosis factor receptor superfamily member 13C (175 aa).

Topologically, residues 1-71 are extracellular; the sequence is MGARRLRVRS…EGSALRPDVA (71 aa). One copy of the TNFR-Cys; truncated repeat lies at 21–38; sequence QCNQTECFDPLVRNCVSC. Disulfide bonds link Cys-22–Cys-35 and Cys-27–Cys-38. Asn-23 carries an N-linked (GlcNAc...) asparagine glycan. The interval 29–34 is essential for TNFSF13B/TALL1/BAFF/BLyS binding; the sequence is DPLVRN. A helical; Signal-anchor for type III membrane protein membrane pass occupies residues 72–92; it reads LLVGAPALLGLILALTLVGLV. The Cytoplasmic segment spans residues 93-175; that stretch reads SLVSWRWRQQ…VTTKTAGPEQ (83 aa). Positions 124-175 are disordered; that stretch reads VPSSETPHASAPTWPPLKEDADSALPRHSVPVPATELGSTELVTTKTAGPEQ. Residues 160–175 are compositionally biased toward polar residues; that stretch reads LGSTELVTTKTAGPEQ.

In terms of tissue distribution, highly expressed in spleen and testis; detected at lower levels in lung and thymus.

The protein resides in the membrane. B-cell receptor specific for TNFSF13B/TALL1/BAFF/BLyS. Promotes the survival of mature B-cells and the B-cell response. This chain is Tumor necrosis factor receptor superfamily member 13C (Tnfrsf13c), found in Mus musculus (Mouse).